The chain runs to 227 residues: 7-cyano-7-deazaguanine synthase (227 aa).

8-18 (VSGGADSATVL) provides a ligand contact to ATP. Positions 192, 202, 205, and 208 each coordinate Zn(2+).

The protein belongs to the QueC family. Zn(2+) serves as cofactor.

It carries out the reaction 7-carboxy-7-deazaguanine + NH4(+) + ATP = 7-cyano-7-deazaguanine + ADP + phosphate + H2O + H(+). The protein operates within purine metabolism; 7-cyano-7-deazaguanine biosynthesis. Its function is as follows. Catalyzes the ATP-dependent conversion of 7-carboxy-7-deazaguanine (CDG) to 7-cyano-7-deazaguanine (preQ(0)). This Rickettsia canadensis (strain McKiel) protein is 7-cyano-7-deazaguanine synthase.